Consider the following 293-residue polypeptide: MPEGLIVKALSGFYYVQSEGALIQCRGRGVFRKRKQTPLVGDYVEFEAENETDGYVMAIKERKNQLNRPPIANVDQAILVFSAKEPDFHTLLLDRFLVHIEQHDIKPVLIISKTDLLEASERDALTRQVAMYEQIGYPVLYTSTKQADDPSELLPLLANQVSVIAGQSGVGKSSLLNALAPEAKIETNEISRHLGRGRHTTRHTELLPIGEGLVADTPGFSSLEFTDMEAEDLRFCFPEFLSLMDDCKFRGCLHDKEPKCAIKDAVETGEVDSFRYKHYLQFLHEIQDQKRRY.

The region spanning 63 to 223 (KNQLNRPPIA…VADTPGFSSL (161 aa)) is the CP-type G domain. GTP is bound by residues 112–115 (SKTD) and 166–174 (GQSGVGKSS). 4 residues coordinate Zn(2+): C247, C252, H254, and C260.

It belongs to the TRAFAC class YlqF/YawG GTPase family. RsgA subfamily. Monomer. Associates with 30S ribosomal subunit, binds 16S rRNA. Zn(2+) serves as cofactor.

Its subcellular location is the cytoplasm. In terms of biological role, one of several proteins that assist in the late maturation steps of the functional core of the 30S ribosomal subunit. Helps release RbfA from mature subunits. May play a role in the assembly of ribosomal proteins into the subunit. Circularly permuted GTPase that catalyzes slow GTP hydrolysis, GTPase activity is stimulated by the 30S ribosomal subunit. The polypeptide is Small ribosomal subunit biogenesis GTPase RsgA (Shouchella clausii (strain KSM-K16) (Alkalihalobacillus clausii)).